Consider the following 289-residue polypeptide: Ribonuclease H2 subunit A (289 aa).

The RNase H type-2 domain occupies 20 to 249; that stretch reads PFVMGIDEAG…TETAMRGACF (230 aa). A divalent metal cation is bound by residues Asp-26, Glu-27, and Asp-134.

The protein belongs to the RNase HII family. Eukaryotic subfamily. The cofactor is Mn(2+). Mg(2+) is required as a cofactor.

It carries out the reaction Endonucleolytic cleavage to 5'-phosphomonoester.. Its function is as follows. Endonuclease that specifically degrades the RNA of RNA-DNA hybrids. Participates in DNA replication. This is Ribonuclease H2 subunit A (rnaseh2A) from Dictyostelium discoideum (Social amoeba).